Consider the following 161-residue polypeptide: MQTIEQQITNVIEESLTDMGFELVLVKVKGVNPKVVEILIDSLNGERISVEDCTKASRTISAILDVEDLIEAAYSLEVASSGLERPLVKFENYNRFLEREVKIKLKELLNGKTRYQGKIIKAENNKIYLKCEEQEVLIDYDLIKNANLVLTEEVFKKLLKQ.

This sequence belongs to the RimP family.

The protein localises to the cytoplasm. Required for maturation of 30S ribosomal subunits. This is Ribosome maturation factor RimP from Rickettsia massiliae (strain Mtu5).